Here is a 458-residue protein sequence, read N- to C-terminus: MSTGTVVQVIGAVVDVEFPHDAVPQVYDALEIKSEGLVLEVQQQLGGGVVRTIAMGSSDGLRRGLEVVNSGSPITVPVGSATLGRIMNVLGEPVDEAGPIGEEDRYVIHREAPSYEDQSNTTELLETGIKVIDLVCPFAKGGKVGLFGGAGVGKTVNMMELINNIAKAHSGLSVFAGVGERTREGNDFYYEMEDSGVLDKVAMVYGQMNEPPGNRLRVALTGLTMAEKFRDEGKDVLFFVDNIYRYTLAGTEVSALLGRMPSAVGYQPTLAEEMGVLQERITSTKTGSITSVQAVYVPADDLTDPSPATTFAHLDATVVLSRNIASLGIYPAVDPLDSTSRQLDPQVVGQEHYDVANGVQTVLQRYKELKDIIAILGMDELSDEDKTTVFRARKIEKYLSQPFFVAEVFTGSPGKYVSLKDTIRGFKGILEGEFDHLPEQAFYMVGSIDEAVEKANKK.

An ATP-binding site is contributed by 148–155 (GGAGVGKT).

It belongs to the ATPase alpha/beta chains family. F-type ATPases have 2 components, CF(1) - the catalytic core - and CF(0) - the membrane proton channel. CF(1) has five subunits: alpha(3), beta(3), gamma(1), delta(1), epsilon(1). CF(0) has three main subunits: a(1), b(2) and c(9-12). The alpha and beta chains form an alternating ring which encloses part of the gamma chain. CF(1) is attached to CF(0) by a central stalk formed by the gamma and epsilon chains, while a peripheral stalk is formed by the delta and b chains.

It is found in the cell inner membrane. The catalysed reaction is ATP + H2O + 4 H(+)(in) = ADP + phosphate + 5 H(+)(out). Produces ATP from ADP in the presence of a proton gradient across the membrane. The catalytic sites are hosted primarily by the beta subunits. This Shewanella pealeana (strain ATCC 700345 / ANG-SQ1) protein is ATP synthase subunit beta.